The chain runs to 211 residues: MKIAAFVVACLVATSAVSCAPTTRALTDDFDDFVGLLPLNDLLDLAMRYLLTDKEVQQTLLYLQGEEFSAVWDQFFELSAVRDLLQYLEEAGVPAYESLNVVADFLGLSPLKPTSVRSLSLAARTGGLNGLLEEALAMMPAAELEAMFEEKMKSSTEFKALFEKMQNFDHKQLRALYESSTEVQNMIHKLESLGVDVDHIVEVLKDFFGWN.

Residues 1–19 form the signal peptide; sequence MKIAAFVVACLVATSAVSC.

The chain is Protein G12 from Anopheles gambiae (African malaria mosquito).